The primary structure comprises 639 residues: Mediator of RNA polymerase II transcription subunit 17 (639 aa).

The protein belongs to the Mediator complex subunit 17 family. In terms of assembly, component of the Mediator complex.

It is found in the nucleus. Functionally, component of the Mediator complex, a coactivator involved in the regulated transcription of nearly all RNA polymerase II-dependent genes. Mediator functions as a bridge to convey information from gene-specific regulatory proteins to the basal RNA polymerase II transcription machinery. Mediator is recruited to promoters by direct interactions with regulatory proteins and serves as a scaffold for the assembly of a functional preinitiation complex with RNA polymerase II and the general transcription factors. This Xenopus tropicalis (Western clawed frog) protein is Mediator of RNA polymerase II transcription subunit 17 (med17).